The primary structure comprises 289 residues: Oxaloacetate decarboxylase (289 aa).

Ser-50 serves as a coordination point for substrate. Position 88 (Asp-88) interacts with Mg(2+). The substrate site is built by Arg-159 and His-235.

Belongs to the isocitrate lyase/PEP mutase superfamily. Oxaloacetate decarboxylase family. In terms of assembly, homotetramer; dimer of dimers. Mg(2+) serves as cofactor.

It carries out the reaction oxaloacetate + H(+) = pyruvate + CO2. Its function is as follows. Catalyzes the decarboxylation of oxaloacetate into pyruvate. Seems to play a role in maintaining cellular concentrations of bicarbonate and pyruvate. The protein is Oxaloacetate decarboxylase of Pseudomonas fluorescens (strain ATCC BAA-477 / NRRL B-23932 / Pf-5).